We begin with the raw amino-acid sequence, 421 residues long: SIRNPQLYPLKPCKGTASMTLGCLVKDYFPNPVTVTWYSDSLNMSTVNFPALGSELKVTTSQVTSWGKSAKNFTCHVTHPPSFNESRTILVRPVNITEPTLELLHSSCDPNAFHSTIQLYCFIYGHILNDVSVSWLMDDREITDTLAQTVLIKEEGKLASTCSKLNITEQQWMSESTFTCKVTSQGVDYLAHTRRCPDHEPRGVITYLIPPSPLDLYQNGAPKLTCLVVDLESEKNVNVTWNQEKKTSVSASQWYTKHHNNATTSITSILPVVAKDWIEGYGYQCIVDHPDFPKPIVRSITKTPGQRSAPEVYVFPPPEEESEDKRTLTCLIQNFFPEDISVQWLGDGKLISNSQHSTTTPLKSNGSNQGFFIFSRLEVAKTLWTQRKQFTCQVIHEALQKPRKLEKTISTSLGNTSLRPS.

Ig-like domains are found at residues 5–97 (PQLY…VNIT), 99–184 (PTLE…KVTS), 201–301 (PRGV…RSIT), and 310–410 (PEVY…KTIS). Cysteines 23 and 75 form a disulfide. Residues Asn-43, Asn-72, Asn-84, Asn-95, Asn-166, Asn-238, Asn-261, Asn-365, and Asn-415 are each glycosylated (N-linked (GlcNAc...) asparagine). 3 disulfide bridges follow: Cys-121/Cys-180, Cys-226/Cys-285, and Cys-330/Cys-392.

The basic structural unit consists of two identical heavy chains and two identical light chains; disulfide-linked. N-terminal variable regions of the heavy and light chains form the antigen binding sites, whereas the C-terminal constant regions of the heavy chains interact with immune receptors to mediate effector functions.

It localises to the secreted. The protein resides in the cell membrane. Its function is as follows. Constant region of immunoglobulin heavy chains. Immunoglobulins, also known as antibodies, are membrane-bound or secreted glycoproteins produced by B lymphocytes. In the recognition phase of humoral immunity, the membrane-bound immunoglobulins serve as receptors which, upon binding of a specific antigen, trigger the clonal expansion and differentiation of B lymphocytes into immunoglobulins-secreting plasma cells. Secreted immunoglobulins mediate the effector phase of humoral immunity, which results in the elimination of bound antigens. The antigen binding site is formed by the variable domain of one heavy chain, together with that of its associated light chain. Thus, each immunoglobulin has two antigen binding sites with remarkable affinity for a particular antigen. The variable domains are assembled by a process called V-(D)-J rearrangement and can then be subjected to somatic hypermutations which, after exposure to antigen and selection, allow affinity maturation for a particular antigen. This chain is Immunoglobulin heavy constant epsilon, found in Mus musculus (Mouse).